A 147-amino-acid chain; its full sequence is Large ribosomal subunit protein bL9 (147 aa).

Belongs to the bacterial ribosomal protein bL9 family.

Functionally, binds to the 23S rRNA. The chain is Large ribosomal subunit protein bL9 from Citrifermentans bemidjiense (strain ATCC BAA-1014 / DSM 16622 / JCM 12645 / Bem) (Geobacter bemidjiensis).